A 441-amino-acid polypeptide reads, in one-letter code: Ribosomal protein uS12 methylthiotransferase RimO (441 aa).

Positions 8–118 (PKIGFVSLGC…VLEHVHHYVP (111 aa)) constitute an MTTase N-terminal domain. C17, C53, C82, C150, C154, and C157 together coordinate [4Fe-4S] cluster. Positions 136–373 (LTPRHYAYLK…MQLQQQISAE (238 aa)) constitute a Radical SAM core domain. The TRAM domain occupies 376–441 (QEKVGREILV…DEYDLWGSRV (66 aa)).

The protein belongs to the methylthiotransferase family. RimO subfamily. [4Fe-4S] cluster is required as a cofactor.

It localises to the cytoplasm. The catalysed reaction is L-aspartate(89)-[ribosomal protein uS12]-hydrogen + (sulfur carrier)-SH + AH2 + 2 S-adenosyl-L-methionine = 3-methylsulfanyl-L-aspartate(89)-[ribosomal protein uS12]-hydrogen + (sulfur carrier)-H + 5'-deoxyadenosine + L-methionine + A + S-adenosyl-L-homocysteine + 2 H(+). In terms of biological role, catalyzes the methylthiolation of an aspartic acid residue of ribosomal protein uS12. In Escherichia coli (strain UTI89 / UPEC), this protein is Ribosomal protein uS12 methylthiotransferase RimO.